A 657-amino-acid polypeptide reads, in one-letter code: Glycogen debranching enzyme (657 aa).

Asp-336 functions as the Nucleophile in the catalytic mechanism. Catalysis depends on Glu-371, which acts as the Proton donor. The segment at 460–479 is disordered; that stretch reads ANGEENRDGTNNNYSNNHGK.

It belongs to the glycosyl hydrolase 13 family.

The enzyme catalyses Hydrolysis of (1-&gt;6)-alpha-D-glucosidic linkages to branches with degrees of polymerization of three or four glucose residues in limit dextrin.. The protein operates within glycan degradation; glycogen degradation. Removes maltotriose and maltotetraose chains that are attached by 1,6-alpha-linkage to the limit dextrin main chain, generating a debranched limit dextrin. This chain is Glycogen debranching enzyme, found in Escherichia coli O1:K1 / APEC.